The chain runs to 203 residues: MIGQLSGKVDAQGDDYVIIDVNGVGYLVYASGKTLGKLAEGEFYKLFIETHVREEHIHLYGFLNLEEKIFFNLLQSVNGIGTRMALFILSSLTPSDIQIAVNNEDKNIFKAISGVGAKLAERIVLELKGKVAKISSGSAIIKESLNIKHITPVASNEVIKALVNLGFSRFEAQNAVQGIITQNPEISIDELIKTALKNRNSNF.

Positions methionine 1 to leucine 63 are domain I. The interval asparagine 64–lysine 142 is domain II. The flexible linker stretch occupies residues glutamate 143–histidine 149. Residues isoleucine 150–phenylalanine 203 are domain III.

It belongs to the RuvA family. Homotetramer. Forms an RuvA(8)-RuvB(12)-Holliday junction (HJ) complex. HJ DNA is sandwiched between 2 RuvA tetramers; dsDNA enters through RuvA and exits via RuvB. An RuvB hexamer assembles on each DNA strand where it exits the tetramer. Each RuvB hexamer is contacted by two RuvA subunits (via domain III) on 2 adjacent RuvB subunits; this complex drives branch migration. In the full resolvosome a probable DNA-RuvA(4)-RuvB(12)-RuvC(2) complex forms which resolves the HJ.

Its subcellular location is the cytoplasm. In terms of biological role, the RuvA-RuvB-RuvC complex processes Holliday junction (HJ) DNA during genetic recombination and DNA repair, while the RuvA-RuvB complex plays an important role in the rescue of blocked DNA replication forks via replication fork reversal (RFR). RuvA specifically binds to HJ cruciform DNA, conferring on it an open structure. The RuvB hexamer acts as an ATP-dependent pump, pulling dsDNA into and through the RuvAB complex. HJ branch migration allows RuvC to scan DNA until it finds its consensus sequence, where it cleaves and resolves the cruciform DNA. In Rickettsia africae (strain ESF-5), this protein is Holliday junction branch migration complex subunit RuvA.